Here is a 162-residue protein sequence, read N- to C-terminus: Flagellar assembly factor FliW (162 aa).

It belongs to the FliW family. As to quaternary structure, interacts with translational regulator CsrA and flagellin(s).

The protein resides in the cytoplasm. Its function is as follows. Acts as an anti-CsrA protein, binds CsrA and prevents it from repressing translation of its target genes, one of which is flagellin. Binds to flagellin and participates in the assembly of the flagellum. This Alkaliphilus metalliredigens (strain QYMF) protein is Flagellar assembly factor FliW.